The following is an 89-amino-acid chain: MMNDHNERKPLRTIKGRVISNKMQKTVTVLVERQIKHALYGKYIKRSTKLHAHDADDLCNEGDVVLMTEVAPISKTKNWRVVEIVARSD.

This sequence belongs to the universal ribosomal protein uS17 family. As to quaternary structure, part of the 30S ribosomal subunit.

One of the primary rRNA binding proteins, it binds specifically to the 5'-end of 16S ribosomal RNA. In Xylella fastidiosa (strain 9a5c), this protein is Small ribosomal subunit protein uS17.